The sequence spans 1073 residues: Lon protease homolog, mitochondrial (1073 aa).

A mitochondrion-targeting transit peptide spans 1 to 27 (MIKASKCNKARALFLVRTSIPRTFIRN). Composition is skewed to basic and acidic residues over residues 69 to 107 (FDSKKEKQPSTDKSNDKDKPSRKEKGKDKEKENEERKDI) and 113 to 123 (YDIKEETDSKP). Residues 69-173 (FDSKKEKQPS…DKEFLSPSDA (105 aa)) are disordered. Over residues 132-150 (SSKSSISSSSGGANNNNNN) the composition is skewed to low complexity. A compositionally biased stretch (basic and acidic residues) spans 158–167 (DDGSPKDKEF). One can recognise a Lon N-terminal domain in the interval 177 to 395 (PPFLAIAMKD…LSLQLLQVEA (219 aa)). An ATP-binding site is contributed by 543 to 550 (GPPGTGKT). Residues 775-785 (SVISDKAKKDA) show a composition bias toward basic and acidic residues. Positions 775 to 821 (SVISDKAKKDAGSSSIESNDSNTEAKVSTTTENEKKQEQKQKQDEEI) are disordered. Over residues 790 to 805 (IESNDSNTEAKVSTTT) the composition is skewed to polar residues. Basic and acidic residues predominate over residues 806-821 (ENEKKQEQKQKQDEEI). The 189-residue stretch at 856–1044 (TLNPGVATGL…SEVFEHLFKG (189 aa)) folds into the Lon proteolytic domain. Catalysis depends on residues serine 950 and lysine 993.

The protein belongs to the peptidase S16 family. In terms of assembly, homohexamer or homoheptamer. Organized in a ring with a central cavity.

The protein resides in the mitochondrion matrix. It carries out the reaction Hydrolysis of proteins in presence of ATP.. Functionally, ATP-dependent serine protease that mediates the selective degradation of misfolded, unassembled or oxidatively damaged polypeptides as well as certain short-lived regulatory proteins in the mitochondrial matrix. May also have a chaperone function in the assembly of inner membrane protein complexes. Participates in the regulation of mitochondrial gene expression and in the maintenance of the integrity of the mitochondrial genome. Binds to mitochondrial DNA in a site-specific manner. The chain is Lon protease homolog, mitochondrial from Candida dubliniensis (strain CD36 / ATCC MYA-646 / CBS 7987 / NCPF 3949 / NRRL Y-17841) (Yeast).